A 742-amino-acid polypeptide reads, in one-letter code: Protein-associating with the carboxyl-terminal domain of ezrin (742 aa).

G2 carries the N-myristoyl glycine lipid modification. The 244-residue stretch at 2-245 (GSENSALKSY…LCTLLSHDFF (244 aa)) folds into the Protein kinase domain. HEAT repeat units follow at residues 199–238 (ESLL…ALCT), 285–323 (LIAS…HAQG), 333–370 (LFQS…HFTQ), and 372–409 (QLKK…LLGP). At S439 the chain carries Phosphoserine. Disordered regions lie at residues 506–544 (LSDV…QTVN), 568–598 (SSWD…TSGE), and 629–652 (GDDA…VPSE). Over residues 529 to 539 (WPDWSEPEEPE) the composition is skewed to acidic residues. The tract at residues 548–742 (WPREPCDDVK…GELNWEDNNW (195 aa)) is interaction with EZR. S707 is modified (phosphoserine). Positions 723–742 (EGEAEGWEEEGELNWEDNNW) are disordered.

The protein belongs to the protein kinase superfamily. In terms of assembly, interacts with EZR/VIL2 C-terminal domain. Post-translationally, may be myristoylated; myristoylation may target it to Golgi compartment. In terms of processing, phosphorylated. Ubiquitously expressed.

Its subcellular location is the cytoplasm. It localises to the golgi apparatus. It is found in the cell projection. The protein resides in the lamellipodium. May play a role in regulating cell adhesion/migration complexes in migrating cells. The polypeptide is Protein-associating with the carboxyl-terminal domain of ezrin (SCYL3) (Homo sapiens (Human)).